The primary structure comprises 122 residues: Large ribosomal subunit protein uL14 (122 aa).

This sequence belongs to the universal ribosomal protein uL14 family. As to quaternary structure, part of the 50S ribosomal subunit. Forms a cluster with proteins L3 and L19. In the 70S ribosome, L14 and L19 interact and together make contacts with the 16S rRNA in bridges B5 and B8.

Binds to 23S rRNA. Forms part of two intersubunit bridges in the 70S ribosome. In Chlorobium limicola (strain DSM 245 / NBRC 103803 / 6330), this protein is Large ribosomal subunit protein uL14.